The chain runs to 446 residues: ATP-dependent protease ATPase subunit HslU (446 aa).

Residues Ile18, 60-65, Asp259, Glu324, and Arg396 each bind ATP; that span reads GVGKTE.

This sequence belongs to the ClpX chaperone family. HslU subfamily. A double ring-shaped homohexamer of HslV is capped on each side by a ring-shaped HslU homohexamer. The assembly of the HslU/HslV complex is dependent on binding of ATP.

It localises to the cytoplasm. ATPase subunit of a proteasome-like degradation complex; this subunit has chaperone activity. The binding of ATP and its subsequent hydrolysis by HslU are essential for unfolding of protein substrates subsequently hydrolyzed by HslV. HslU recognizes the N-terminal part of its protein substrates and unfolds these before they are guided to HslV for hydrolysis. This is ATP-dependent protease ATPase subunit HslU from Vibrio atlanticus (strain LGP32) (Vibrio splendidus (strain Mel32)).